The following is a 365-amino-acid chain: Annexin B22 (365 aa).

4 Annexin repeats span residues 34–105 (FSAS…QLIV), 106–185 (DTPY…SLVQ), 211–283 (ELAE…AVLR), and 287–358 (DRPS…VLMG). 20 residues coordinate Ca(2+): Met47, Gly49, Gly51, Thr52, Glu54, Asp91, Met119, Gly121, Gly123, Asp126, Lys169, Glu171, Thr172, Glu177, Asp273, Met300, Gly302, Leu303, Gly304, and Asp344.

This sequence belongs to the annexin family. In terms of assembly, homodimer.

The protein resides in the tegument. It localises to the secreted. Its subcellular location is the extracellular exosome. It is found in the host cell. Functionally, involved in reproduction of the worm. Involved in host-parasite interaction. Delivered into the host cell by means of parasite exosomes. Binds to acidic phospholipid membranes in a calcium-dependent manner in vitro. Causes aggregation of liposomes in the presence of calcium, but not in its absence. Likely to promote membrane fusion. May provide structural integrity within the tegument. The polypeptide is Annexin B22 (Schistosoma mansoni (Blood fluke)).